A 337-amino-acid chain; its full sequence is Lipoyl synthase (337 aa).

Residues C81, C86, C92, C107, C111, C114, and S323 each coordinate [4Fe-4S] cluster. One can recognise a Radical SAM core domain in the interval 93 to 312 (FSHGTATFMI…EDYGNALGFS (220 aa)).

It belongs to the radical SAM superfamily. Lipoyl synthase family. [4Fe-4S] cluster is required as a cofactor.

Its subcellular location is the cytoplasm. It catalyses the reaction [[Fe-S] cluster scaffold protein carrying a second [4Fe-4S](2+) cluster] + N(6)-octanoyl-L-lysyl-[protein] + 2 oxidized [2Fe-2S]-[ferredoxin] + 2 S-adenosyl-L-methionine + 4 H(+) = [[Fe-S] cluster scaffold protein] + N(6)-[(R)-dihydrolipoyl]-L-lysyl-[protein] + 4 Fe(3+) + 2 hydrogen sulfide + 2 5'-deoxyadenosine + 2 L-methionine + 2 reduced [2Fe-2S]-[ferredoxin]. It functions in the pathway protein modification; protein lipoylation via endogenous pathway; protein N(6)-(lipoyl)lysine from octanoyl-[acyl-carrier-protein]: step 2/2. In terms of biological role, catalyzes the radical-mediated insertion of two sulfur atoms into the C-6 and C-8 positions of the octanoyl moiety bound to the lipoyl domains of lipoate-dependent enzymes, thereby converting the octanoylated domains into lipoylated derivatives. This chain is Lipoyl synthase, found in Xanthomonas euvesicatoria pv. vesicatoria (strain 85-10) (Xanthomonas campestris pv. vesicatoria).